Reading from the N-terminus, the 352-residue chain is Putative hetero-Diels-Alderase (352 aa).

A signal peptide spans 1-20 (MRYHLSALVLVFTAFRETLT). N-linked (GlcNAc...) asparagine glycans are attached at residues Asn-26, Asn-41, Asn-47, Asn-135, Asn-211, and Asn-310.

The protein belongs to the eupF Diels-Alderase family.

Its pathway is secondary metabolite biosynthesis; terpenoid biosynthesis. Functionally, putative hetero-Diels-Alderase; part of the gene cluster that mediates the biosynthesis of eupenifeldin, a bistropolone meroterpenoid that acts as an antitumor agent. The first step of eupenifeldin biosynthesis is the biosynthesis of 3-methylorcinaldehyde performed by the non-reducing polyketide synthase eupA. Oxidative dearomatization of 3-methylorcinaldehyde likely catalyzed by the FAD-dependent monooxygenase eupB is followed by oxidative ring expansion by the 2-oxoglutarate-dependent dioxygenase eupC to provide the first tropolone metabolite, tropolone stipitaldehyde. In parallel, generation of sesquiterpene alpha-humulene from farnesylpyrophosphate (FPP) is catalyzed by the terpene cyclase eupE. The cytochrome P450 monooxygenase eupD then hydroxylates humulene to humulenol. The putative Diels-Alderase eupF probably catalyzes the formation of the tropolone-humulene skeleton by linking humulenol and the polyketide moiety. The short-chain dehydrogenase/reductase eupG and the flavin-dependent monooxygenase eupH are also essential for eupenifeldin biosynthesis and are likely the additional decorating enzymes of the tropolone-humulene skeleton to produce final eupenifeldin or derivatives. This Phoma sp protein is Putative hetero-Diels-Alderase.